A 317-amino-acid polypeptide reads, in one-letter code: Cytochrome f (317 aa).

Residues 1–31 form the signal peptide; sequence MIFKPQSFLKAIVLSMTITFAFNMSAPIASA. Y32, C52, C55, and H56 together coordinate heme. A helical membrane pass occupies residues 280–302; it reads PVRIQGLLAFFACILLAQILLVV.

The protein belongs to the cytochrome f family. In terms of assembly, the 4 large subunits of the cytochrome b6-f complex are cytochrome b6, subunit IV (17 kDa polypeptide, petD), cytochrome f and the Rieske protein, while the 4 small subunits are PetG, PetL, PetM and PetN. The complex functions as a dimer. The cofactor is heme.

The protein resides in the plastid. The protein localises to the chloroplast thylakoid membrane. Its function is as follows. Component of the cytochrome b6-f complex, which mediates electron transfer between photosystem II (PSII) and photosystem I (PSI), cyclic electron flow around PSI, and state transitions. This is Cytochrome f from Chlamydomonas subcaudata.